We begin with the raw amino-acid sequence, 418 residues long: Actin-related protein 3 (418 aa).

Methionine 1 carries the N-acetylmethionine modification.

It belongs to the actin family. ARP3 subfamily. In terms of assembly, component of the Arp2/3 complex composed of arpB/Arp2, arpC/Arp3, arcA/p41-arc, arcB/p34-arc, arcC/p21-arc, arcD/p20-arc and arcE/p16-arc. Interacts with carmil (via the region between the LRR domain and COOH-terminal proline-rich domain); carmil is required for Arp2/3-dependent actin nucleation. Arp2/3 complex, MyoB, MyoC, and the alpha and beta subunits of capping protein all form a larger complex with carmil.

Its subcellular location is the cytoplasm. It localises to the cytoskeleton. The protein localises to the cytosol. It is found in the cell cortex. The protein resides in the cell projection. Its subcellular location is the pseudopodium. Its function is as follows. Functions as ATP-binding component of the Arp2/3 complex which is involved in regulation of actin polymerization and together with an activating nucleation-promoting factor (NPF) mediates the formation of branched actin networks. Seems to contact the pointed end of the daughter actin filament. The Arp2/3 complex is involved in organizing the actin system in cell motility and chemotaxis, in phagocytosis and macropinocytosis, at late steps of endosome processing, and in mitosis. In concert with a group of other proteins, the Arp2/3 complex plays a general role in the rapid activation and adaptation of the actin system to its multiple functions. This is Actin-related protein 3 (arpC) from Dictyostelium discoideum (Social amoeba).